The following is a 356-amino-acid chain: AT-hook motif nuclear-localized protein 1 (356 aa).

The interval 1-127 (MVLNMESTGE…PSHLPPPSSH (127 aa)) is disordered. Residues 49 to 66 (VTPPPPQPSSHHTAPPPL) are compositionally biased toward pro residues. Residues 88–97 (MKKKRGRPRK) show a composition bias toward basic residues. The Bipartite nuclear localization signal motif lies at 89 to 97 (KKKRGRPRK). Positions 89 to 101 (KKKRGRPRKYGPD) form a DNA-binding region, a.T hook. The segment covering 106 to 118 (ALSPKPISSAPAP) has biased composition (low complexity). The 143-residue stretch at 167 to 309 (GGNFTPHIIT…KHDFMLSSPT (143 aa)) folds into the PPC domain. A required for nuclear localization region spans residues 270 to 287 (GLLVAASPVQVVVGSFLA). The short motif at 295–302 (KPKKNKHD) is the Nuclear localization signal element.

It is found in the nucleus. Its subcellular location is the nucleoplasm. It localises to the chromosome. In terms of biological role, transcription factor that specifically binds AT-rich DNA sequences related to the nuclear matrix attachment regions (MARs). May play a function in the positioning of chromatin fibers within the nucleus. This is AT-hook motif nuclear-localized protein 1 from Arabidopsis thaliana (Mouse-ear cress).